The primary structure comprises 219 residues: ATP-dependent Clp protease proteolytic subunit 1 (219 aa).

The active-site Nucleophile is S113. H138 is an active-site residue.

The protein belongs to the peptidase S14 family. As to quaternary structure, fourteen ClpP subunits assemble into 2 heptameric rings which stack back to back to give a disk-like structure with a central cavity, resembling the structure of eukaryotic proteasomes.

It localises to the cytoplasm. The catalysed reaction is Hydrolysis of proteins to small peptides in the presence of ATP and magnesium. alpha-casein is the usual test substrate. In the absence of ATP, only oligopeptides shorter than five residues are hydrolyzed (such as succinyl-Leu-Tyr-|-NHMec, and Leu-Tyr-Leu-|-Tyr-Trp, in which cleavage of the -Tyr-|-Leu- and -Tyr-|-Trp bonds also occurs).. Its function is as follows. Cleaves peptides in various proteins in a process that requires ATP hydrolysis. Has a chymotrypsin-like activity. Plays a major role in the degradation of misfolded proteins. Probably partially responsible for degradation of ECF sigma factor SigR prime. This Streptomyces coelicolor (strain ATCC BAA-471 / A3(2) / M145) protein is ATP-dependent Clp protease proteolytic subunit 1.